Here is a 455-residue protein sequence, read N- to C-terminus: Bifunctional protein GlmU (455 aa).

Residues 1 to 226 are pyrophosphorylase; sequence MSLDIVILAA…PMEVQGANDR (226 aa). UDP-N-acetyl-alpha-D-glucosamine contacts are provided by residues 8–11, K22, Q73, 78–79, 99–101, G136, E151, N166, and N224; these read LAAG, GT, and YGD. Mg(2+) is bound at residue D101. N224 is a binding site for Mg(2+). The tract at residues 227–247 is linker; the sequence is RQLSELERHYQLREGRRLMAQ. An N-acetyltransferase region spans residues 248–455; sequence GVTLRDPARF…WKRPEKTKKS (208 aa). Positions 330 and 348 each coordinate UDP-N-acetyl-alpha-D-glucosamine. Residue H360 is the Proton acceptor of the active site. The UDP-N-acetyl-alpha-D-glucosamine site is built by Y363 and N374. Acetyl-CoA contacts are provided by residues A377, 383 to 384, S402, A420, and R437; that span reads NY.

It in the N-terminal section; belongs to the N-acetylglucosamine-1-phosphate uridyltransferase family. This sequence in the C-terminal section; belongs to the transferase hexapeptide repeat family. In terms of assembly, homotrimer. It depends on Mg(2+) as a cofactor.

It is found in the cytoplasm. It carries out the reaction alpha-D-glucosamine 1-phosphate + acetyl-CoA = N-acetyl-alpha-D-glucosamine 1-phosphate + CoA + H(+). It catalyses the reaction N-acetyl-alpha-D-glucosamine 1-phosphate + UTP + H(+) = UDP-N-acetyl-alpha-D-glucosamine + diphosphate. It participates in nucleotide-sugar biosynthesis; UDP-N-acetyl-alpha-D-glucosamine biosynthesis; N-acetyl-alpha-D-glucosamine 1-phosphate from alpha-D-glucosamine 6-phosphate (route II): step 2/2. The protein operates within nucleotide-sugar biosynthesis; UDP-N-acetyl-alpha-D-glucosamine biosynthesis; UDP-N-acetyl-alpha-D-glucosamine from N-acetyl-alpha-D-glucosamine 1-phosphate: step 1/1. It functions in the pathway bacterial outer membrane biogenesis; LPS lipid A biosynthesis. Its function is as follows. Catalyzes the last two sequential reactions in the de novo biosynthetic pathway for UDP-N-acetylglucosamine (UDP-GlcNAc). The C-terminal domain catalyzes the transfer of acetyl group from acetyl coenzyme A to glucosamine-1-phosphate (GlcN-1-P) to produce N-acetylglucosamine-1-phosphate (GlcNAc-1-P), which is converted into UDP-GlcNAc by the transfer of uridine 5-monophosphate (from uridine 5-triphosphate), a reaction catalyzed by the N-terminal domain. This Pseudomonas putida (strain GB-1) protein is Bifunctional protein GlmU.